We begin with the raw amino-acid sequence, 328 residues long: Hydrogenase-2 operon protein HybA (328 aa).

The first 27 residues, 1-27 (MNRRNFIKAASCGALLTGALPSVSHAA), serve as a signal peptide directing secretion. 3 consecutive 4Fe-4S ferredoxin-type domains span residues 38–68 (LGML…RNPQ), 103–134 (NGYA…KDPK), and 136–165 (GIVH…YDYN). C47, C50, C53, C57, C112, C115, C120, C124, C145, C148, C151, C155, C174, C177, C193, and C197 together coordinate [4Fe-4S] cluster.

It depends on [4Fe-4S] cluster as a cofactor.

The protein resides in the periplasm. Functionally, participates in the periplasmic electron-transferring activity of hydrogenase 2 during its catalytic turnover. The protein is Hydrogenase-2 operon protein HybA (hybA) of Escherichia coli O157:H7.